Consider the following 183-residue polypeptide: UPF0398 protein BLi02355/BL05236 (183 aa).

It belongs to the UPF0398 family.

This Bacillus licheniformis (strain ATCC 14580 / DSM 13 / JCM 2505 / CCUG 7422 / NBRC 12200 / NCIMB 9375 / NCTC 10341 / NRRL NRS-1264 / Gibson 46) protein is UPF0398 protein BLi02355/BL05236.